Reading from the N-terminus, the 292-residue chain is Protease HtpX homolog (292 aa).

2 helical membrane-spanning segments follow: residues isoleucine 4–leucine 24 and leucine 38–leucine 58. A Zn(2+)-binding site is contributed by histidine 144. Glutamate 145 is an active-site residue. Residue histidine 148 participates in Zn(2+) binding. The next 2 helical transmembrane spans lie at glycine 152–serine 172 and isoleucine 199–phenylalanine 219. Glutamate 224 is a Zn(2+) binding site.

Belongs to the peptidase M48B family. The cofactor is Zn(2+).

It is found in the cell inner membrane. This Acidovorax ebreus (strain TPSY) (Diaphorobacter sp. (strain TPSY)) protein is Protease HtpX homolog.